A 219-amino-acid polypeptide reads, in one-letter code: Dual specificity phosphatase 29 (219 aa).

The 149-residue stretch at 53 to 201 folds into the Tyrosine-protein phosphatase domain; that stretch reads HVNEVWPKLY…LRELDRQLVQ (149 aa). Residue 145 to 152 participates in substrate binding; the sequence is HCVMGRSR. The active-site Phosphocysteine intermediate is C146.

This sequence belongs to the protein-tyrosine phosphatase family. Non-receptor class dual specificity subfamily. In terms of assembly, homodimer. Interacts with PRKAA2.

It localises to the cytoplasm. Its subcellular location is the nucleus. It catalyses the reaction O-phospho-L-tyrosyl-[protein] + H2O = L-tyrosyl-[protein] + phosphate. It carries out the reaction O-phospho-L-seryl-[protein] + H2O = L-seryl-[protein] + phosphate. The enzyme catalyses O-phospho-L-threonyl-[protein] + H2O = L-threonyl-[protein] + phosphate. Dual specificity phosphatase able to dephosphorylate phosphotyrosine, phosphoserine and phosphothreonine residues within the same substrate, with a preference for phosphotyrosine as a substrate. Involved in the modulation of intracellular signaling cascades. May regulate glucose metabolism by activating, AMPK, an energy sensor protein kinase. Affects MAP kinase signaling though modulation of the ERK1/2 cascade in skeletal muscle promoting muscle cell differentiation, development and atrophy. In Bos taurus (Bovine), this protein is Dual specificity phosphatase 29 (DUSP29).